A 544-amino-acid chain; its full sequence is MYTDEVRTPQALKSRYFTNLGDLNCRTRRNSATGNSSVASAATPTNGGKQNTKCSPQMSTLVCTPPPKRFHKIRNPFEGALADRLHLPLIASPSLFRARTPQLSSTQFEWNIDEVSQLTPADVEPHETQFHDSPDPELESKAQMAISAFFKESLIVPSPVDCPLRKNRIILNADHTPISNKSSSGRRGRDCSVQTELTLPPILPKALEEALRPYLQPHLAGGTSGRFKSRSSGSDVFNSSMRRKLFDLHNVIVLGEKEAVQSPQMVGSSPQGKQTMFAGRLSDSASGEGSFGSLSPIRNLCGLPLGTPDDGNRSSKRKLLLINELEFPSPIAPPEHLSRRLVHSKVEASISSNEQHDTLSELTGTGRPACRFTPDRSSSPMQALEHSDSSINQRVSRLRVNSTRQLPSQSFLETVDQALFEEVEADDTDEPEADQESDEDEEEAEAMQLSTISFNCSSSNSDTPRGHRRHRSANRKNLSQSFSANLEEVEAQRVKTAPPVINPPAQRIGLYRVDSGFNETSIISTFACSQDISMACCSTPSTRP.

3 disordered regions span residues 28–55 (RRNS…TKCS), 348–391 (ASIS…DSSI), and 422–480 (EVEA…NLSQ). The span at 30–55 (NSATGNSSVASAATPTNGGKQNTKCS) shows a compositional bias: polar residues. The segment covering 422 to 445 (EVEADDTDEPEADQESDEDEEEAE) has biased composition (acidic residues). Low complexity predominate over residues 450–461 (STISFNCSSSNS).

It belongs to the BORA family. In terms of assembly, interacts with aur. Post-translationally, phosphorylated by aur.

It localises to the cytoplasm. The protein resides in the nucleus. Functionally, required for the activation of Aurora-A (aur) at the onset of mitosis. This is Protein aurora borealis (bora) from Drosophila pseudoobscura pseudoobscura (Fruit fly).